Reading from the N-terminus, the 177-residue chain is Outer membrane lipoprotein Blc (177 aa).

Positions 1 to 18 (MRLLPLVAAATAAFLVVA) are cleaved as a signal peptide. Cys19 is lipidated: N-palmitoyl cysteine. A lipid anchor (S-diacylglycerol cysteine) is attached at Cys19.

This sequence belongs to the calycin superfamily. Lipocalin family. Homodimer.

The protein localises to the cell outer membrane. Its function is as follows. Involved in the storage or transport of lipids necessary for membrane maintenance under stressful conditions. Displays a binding preference for lysophospholipids. The protein is Outer membrane lipoprotein Blc (blc) of Escherichia coli O157:H7.